Reading from the N-terminus, the 96-residue chain is Large ribosomal subunit protein uL23 (96 aa).

This sequence belongs to the universal ribosomal protein uL23 family. Part of the 50S ribosomal subunit. Contacts protein L29, and trigger factor when it is bound to the ribosome.

One of the early assembly proteins it binds 23S rRNA. One of the proteins that surrounds the polypeptide exit tunnel on the outside of the ribosome. Forms the main docking site for trigger factor binding to the ribosome. This chain is Large ribosomal subunit protein uL23, found in Enterococcus faecalis (strain ATCC 700802 / V583).